The sequence spans 440 residues: Nuclear fusion protein BIK1 (440 aa).

One can recognise a CAP-Gly domain in the interval 26–69 (GPVDTKAGMFAGVDLLANIGKNDGSFMGKKYFQTEYPQSGLFIQ). Phosphoserine is present on residues Ser-95 and Ser-110. Residues 108–157 (QFSPMDDPKSPTPMRSFRITSRHSGNQQSMDQEASDHHQQQEFGYDNRED) form a disordered region. Polar residues predominate over residues 125–139 (RITSRHSGNQQSMDQ). Positions 141–157 (ASDHHQQQEFGYDNRED) are enriched in basic and acidic residues. Residues 190-397 (NSSEVTIELR…AQAQTAVESL (208 aa)) adopt a coiled-coil conformation. Residues 416–429 (CEHCDTMGHNTAEC) carry the CCHC-box motif.

It is found in the cytoplasm. The protein resides in the cytoskeleton. It localises to the microtubule organizing center. The protein localises to the spindle pole body. Its subcellular location is the spindle. Functionally, required for nuclear fusion, chromosome disjunction, and nuclear segregation during mitosis. Probably required for the formation or stabilization of microtubules during mitosis and for spindle pole body fusion during conjugation. The polypeptide is Nuclear fusion protein BIK1 (BIK1) (Saccharomyces cerevisiae (strain ATCC 204508 / S288c) (Baker's yeast)).